Here is an 833-residue protein sequence, read N- to C-terminus: P protein (833 aa).

Residues 1–172 lie on the Cytoplasmic side of the membrane; that stretch reads MRLENKDIRL…QVSKLGCCVR (172 aa). A helical transmembrane segment spans residues 173–193; the sequence is WIKITGLFVFVVLCSILFSLY. The Extracellular portion of the chain corresponds to 194 to 325; that stretch reads PDQGKFWQLL…QFLGASVEAQ (132 aa). N-linked (GlcNAc...) asparagine glycosylation is found at Asn210, Asn214, and Asn269. The chain crosses the membrane as a helical span at residues 326-346; it reads VASAVAILAGVYTLIIFEIVH. Residues 347 to 348 lie on the Cytoplasmic side of the membrane; the sequence is RT. Residues 349–369 traverse the membrane as a helical segment; it reads LAAMLGALAALAALAVVGDRP. Residues 370–381 are Extracellular-facing; sequence SLTHVVEWIDFE. Residues 382 to 402 form a helical membrane-spanning segment; the sequence is TLALLFGMMILVAVFSETGFF. At 403-417 the chain is on the cytoplasmic side; that stretch reads DYCAVKAYQLSRGRV. A helical membrane pass occupies residues 418-438; sequence WAMIFMLCLMAAILSAFLDNV. Residues 439–501 lie on the Extracellular side of the membrane; sequence TTMLLFTPVT…ELRKMGLDFA (63 aa). A helical transmembrane segment spans residues 502–522; the sequence is GFTAHMFLGICLVLLVSFPLL. Residues 523 to 617 are Cytoplasmic-facing; sequence RLLYWNKKLY…RKHRISDRSL (95 aa). A helical membrane pass occupies residues 618–638; that stretch reads LVKCLTVLGFVISMFFLNSFV. Pro639 is a topological domain (extracellular). A helical membrane pass occupies residues 640–660; that stretch reads GIHLDLGWIAILGAIWLLILA. Topologically, residues 661 to 675 are cytoplasmic; sequence DIHDFEIILHRVEWA. The chain crosses the membrane as a helical span at residues 676-696; it reads TLLFFAALFVLMEALTHLHLV. The Extracellular portion of the chain corresponds to 697-718; the sequence is EYVGEQTALLIKMVPEDQRFAA. Residues 719–739 traverse the membrane as a helical segment; that stretch reads AIVLIVWVSALASSLIDNIPF. The Cytoplasmic portion of the chain corresponds to 740–759; the sequence is TATMIPVLLNLSQDPEISLP. The chain crosses the membrane as a helical span at residues 760 to 780; the sequence is ALPLMYALALGACLGGNGTLI. The Extracellular portion of the chain corresponds to 781–810; the sequence is GASTNVVCAGIAEKHGYGFSFMEFFRLGFP. A helical transmembrane segment spans residues 811–831; it reads VMLMSCTIGMCYLLIAHIVVG. Over 832–833 the chain is Cytoplasmic; sequence WN.

Belongs to the CitM (TC 2.A.11) transporter family. In terms of tissue distribution, most abundant in melanocytes. Also present in neonatal and adult eye tissue presumably as a result of expression in the retinal pigmented epithelium and choroid body, known sites of melanogenesis in the eye. Small but detectable amounts also observed in fetal, neonatal and adult brain. Moderate amounts detected in adult testis and ovary. Not detected in heart, kidney, spleen, liver or thymus.

Its subcellular location is the melanosome membrane. The catalysed reaction is chloride(in) = chloride(out). Its function is as follows. Contributes to a melanosome-specific anion (chloride) current that modulates melanosomal pH for optimal tyrosinase activity required for melanogenesis and the melanosome maturation. One of the components of the mammalian pigmentary system. May serve as a key control point at which color variation is determined. Major determinant of eye color. Seems to regulate the post-translational processing of tyrosinase, which catalyzes the limiting reaction in melanin synthesis. The protein is P protein (Oca2) of Mus musculus (Mouse).